The chain runs to 255 residues: Enolase-phosphatase E1 (255 aa).

D22 and E24 together coordinate Mg(2+). Substrate contacts are provided by residues 136-137 (SS) and K173. Position 199 (D199) interacts with Mg(2+).

Belongs to the HAD-like hydrolase superfamily. MasA/MtnC family. Monomer. Requires Mg(2+) as cofactor.

The protein resides in the cytoplasm. Its subcellular location is the nucleus. The catalysed reaction is 5-methylsulfanyl-2,3-dioxopentyl phosphate + H2O = 1,2-dihydroxy-5-(methylsulfanyl)pent-1-en-3-one + phosphate. It functions in the pathway amino-acid biosynthesis; L-methionine biosynthesis via salvage pathway; L-methionine from S-methyl-5-thio-alpha-D-ribose 1-phosphate: step 3/6. Its pathway is amino-acid biosynthesis; L-methionine biosynthesis via salvage pathway; L-methionine from S-methyl-5-thio-alpha-D-ribose 1-phosphate: step 4/6. Functionally, bifunctional enzyme that catalyzes the enolization of 2,3-diketo-5-methylthiopentyl-1-phosphate (DK-MTP-1-P) into the intermediate 2-hydroxy-3-keto-5-methylthiopentenyl-1-phosphate (HK-MTPenyl-1-P), which is then dephosphorylated to form the acireductone 1,2-dihydroxy-3-keto-5-methylthiopentene (DHK-MTPene). This Verticillium alfalfae (strain VaMs.102 / ATCC MYA-4576 / FGSC 10136) (Verticillium wilt of alfalfa) protein is Enolase-phosphatase E1.